The chain runs to 328 residues: UPF0421 protein SAV1889 (328 aa).

Transmembrane regions (helical) follow at residues 19–39 (IAIF…IYAI), 61–81 (LPAT…FGDQ), 108–128 (VAVL…IFNF), and 132–152 (TLTA…VFPP).

The protein belongs to the UPF0421 family.

It localises to the cell membrane. This Staphylococcus aureus (strain Mu50 / ATCC 700699) protein is UPF0421 protein SAV1889.